The following is a 398-amino-acid chain: Acetate kinase (398 aa).

Asparagine 10 provides a ligand contact to Mg(2+). Position 17 (lysine 17) interacts with ATP. Arginine 91 is a binding site for substrate. Aspartate 148 functions as the Proton donor/acceptor in the catalytic mechanism. ATP is bound by residues 208-212 (HLGNG), 283-285 (DCR), and 331-335 (GIGEN). Mg(2+) is bound at residue glutamate 385.

This sequence belongs to the acetokinase family. Homodimer. Mg(2+) is required as a cofactor. It depends on Mn(2+) as a cofactor.

It is found in the cytoplasm. The catalysed reaction is acetate + ATP = acetyl phosphate + ADP. It participates in metabolic intermediate biosynthesis; acetyl-CoA biosynthesis; acetyl-CoA from acetate: step 1/2. Functionally, catalyzes the formation of acetyl phosphate from acetate and ATP. Can also catalyze the reverse reaction. In Shewanella loihica (strain ATCC BAA-1088 / PV-4), this protein is Acetate kinase.